Here is a 79-residue protein sequence, read N- to C-terminus: M-myrmicitoxin(01)-Tb1a (79 aa).

The N-terminal stretch at 1–26 (MKLSFLSLVLAIILVMALMYTPHAEA) is a signal peptide. Positions 27–56 (KAWADADADATAAADADADAVADALADAVA) are excised as a propeptide. The residue at position 76 (Val76) is a Valine amide.

This sequence belongs to the formicidae venom precursor-01 superfamily. Post-translationally, the C-terminal amidation is important for antimicrobial activity, since a non-amidated synthetic peptide shows a reduced antimicrobial activity (2-20-fold depending on the strain tested). The amidation may play a positive role in the peptide conformation, since amidated peptide shows an increase of about 5% of helical content. As to expression, expressed by the venom gland.

It is found in the secreted. Its subcellular location is the target cell membrane. In terms of biological role, antimicrobial peptide that shows antimicrobial activities against all microorganisms tested with minimal inhibitory concentrations (MICs) values ranging from 0.45 to 97.5 umol/L. This peptide kills the microorganisms by permeabilizating the membranes. It shows a very weak hemolytic activity (HC(50)=325 umol/L) and weak cytotoxicity against human lymphocytes (LC(50)=67.8 umol/L). Gram-negative bacteria tested are E.coli (MIC=24.4 umol/L), C.sakazakii (MIC=5.8 umol/L), P.aeruginosa (MIC=8.7-12.2 umol/L), S.enterica (MIC=5.4 umol/L), and H.pylori (MIC=0.99-3.9 umol/L). Gram-positive bacteria tested are E.hirae (MIC=12.2 umol/L), S.aureus (MIC=3.0-6.4 umol/L), methicillin-resistant S.aureus (MRSA) (MIC=8.7 umol/L), S.xylosus (MIC=0.45-1.3 umol/L), and B.subtilis (MIC=24.4 umol/L). Fungi tested are A.niger (MIC=0.75 umol/L), C.albicans (MIC=17.3 umol/L), G.candidum (MIC=97.5 umol/L), and S.cerevisiae (MIC=6.1 umol/L). Finally the parasite tested is L.infantum (MIC=1.5 umol/L). The sequence is that of M-myrmicitoxin(01)-Tb1a from Tetramorium bicarinatum (Tramp ant).